Here is a 124-residue protein sequence, read N- to C-terminus: UPF0102 protein BL0935 (124 aa).

This sequence belongs to the UPF0102 family.

The polypeptide is UPF0102 protein BL0935 (Bifidobacterium longum (strain NCC 2705)).